The chain runs to 347 residues: Probable inactive UDP-arabinopyranose mutase 2 (347 aa).

An N-linked (Glc...) arginine glycan is attached at Arg145.

This sequence belongs to the RGP family. In terms of assembly, heteromers with UAM1 and UAM3. Is not reversibly glycosylated in vitro by UDP-glucose, UDP-xylose and UDP-galactose.

The protein localises to the golgi apparatus. In terms of biological role, probable inactive UDP-L-arabinose mutase. Inactive in vitro, but associates with UAM1 and UAM3. In Oryza sativa subsp. japonica (Rice), this protein is Probable inactive UDP-arabinopyranose mutase 2.